The chain runs to 590 residues: Arginine--tRNA ligase (590 aa).

The short motif at Pro-132–His-142 is the 'HIGH' region element.

The protein belongs to the class-I aminoacyl-tRNA synthetase family. Monomer.

It is found in the cytoplasm. The enzyme catalyses tRNA(Arg) + L-arginine + ATP = L-arginyl-tRNA(Arg) + AMP + diphosphate. In Treponema denticola (strain ATCC 35405 / DSM 14222 / CIP 103919 / JCM 8153 / KCTC 15104), this protein is Arginine--tRNA ligase.